The following is an 88-amino-acid chain: Large ribosomal subunit protein bL27 (88 aa).

The segment at 1 to 21 (MAHKKGVGSSRNGRDSQPKML) is disordered.

Belongs to the bacterial ribosomal protein bL27 family.

The protein is Large ribosomal subunit protein bL27 of Pelotomaculum thermopropionicum (strain DSM 13744 / JCM 10971 / SI).